The primary structure comprises 426 residues: Enolase 1 (426 aa).

Glutamine 162 lines the (2R)-2-phosphoglycerate pocket. The active-site Proton donor is glutamate 204. Residues aspartate 241, glutamate 284, and aspartate 311 each contribute to the Mg(2+) site. The (2R)-2-phosphoglycerate site is built by lysine 336, arginine 365, serine 366, and lysine 387. Catalysis depends on lysine 336, which acts as the Proton acceptor.

This sequence belongs to the enolase family. Mg(2+) serves as cofactor.

It localises to the cytoplasm. The protein resides in the secreted. The protein localises to the cell surface. The catalysed reaction is (2R)-2-phosphoglycerate = phosphoenolpyruvate + H2O. Its pathway is carbohydrate degradation; glycolysis; pyruvate from D-glyceraldehyde 3-phosphate: step 4/5. Functionally, catalyzes the reversible conversion of 2-phosphoglycerate (2-PG) into phosphoenolpyruvate (PEP). It is essential for the degradation of carbohydrates via glycolysis. This Methanospirillum hungatei JF-1 (strain ATCC 27890 / DSM 864 / NBRC 100397 / JF-1) protein is Enolase 1.